A 212-amino-acid chain; its full sequence is Thymidylate kinase (212 aa).

10–17 contributes to the ATP binding site; the sequence is GLEGAGKT.

Belongs to the thymidylate kinase family.

It carries out the reaction dTMP + ATP = dTDP + ADP. Functionally, phosphorylation of dTMP to form dTDP in both de novo and salvage pathways of dTTP synthesis. In Baumannia cicadellinicola subsp. Homalodisca coagulata, this protein is Thymidylate kinase.